Reading from the N-terminus, the 313-residue chain is ADP-L-glycero-D-manno-heptose-6-epimerase (313 aa).

NADP(+) is bound by residues 10-11, 31-32, arginine 38, lysine 53, 75-79, and asparagine 92; these read FI, DD, and EGACS. Tyrosine 139 acts as the Proton acceptor in catalysis. Lysine 143 is a binding site for NADP(+). Asparagine 168 contacts substrate. NADP(+)-binding residues include valine 169 and lysine 177. The Proton acceptor role is filled by lysine 177. Residues lysine 179, histidine 186, 200-203, arginine 213, and tyrosine 277 each bind substrate; that span reads FEGW.

Belongs to the NAD(P)-dependent epimerase/dehydratase family. HldD subfamily. As to quaternary structure, homopentamer. NADP(+) serves as cofactor.

The enzyme catalyses ADP-D-glycero-beta-D-manno-heptose = ADP-L-glycero-beta-D-manno-heptose. The protein operates within nucleotide-sugar biosynthesis; ADP-L-glycero-beta-D-manno-heptose biosynthesis; ADP-L-glycero-beta-D-manno-heptose from D-glycero-beta-D-manno-heptose 7-phosphate: step 4/4. Its function is as follows. Catalyzes the interconversion between ADP-D-glycero-beta-D-manno-heptose and ADP-L-glycero-beta-D-manno-heptose via an epimerization at carbon 6 of the heptose. This chain is ADP-L-glycero-D-manno-heptose-6-epimerase, found in Marinobacter nauticus (strain ATCC 700491 / DSM 11845 / VT8) (Marinobacter aquaeolei).